A 780-amino-acid polypeptide reads, in one-letter code: Semaphorin-3G (780 aa).

Residues 1-22 (MDPSAWAICCLLGSLLFHVGIP) form the signal peptide. Positions 32–519 (RLRLSYRDLL…SPLGVARLQL (488 aa)) constitute a Sema domain. Asparagine 44 carries an N-linked (GlcNAc...) asparagine glycan. Residues cysteine 105 and cysteine 116 are joined by a disulfide bond. N-linked (GlcNAc...) asparagine glycosylation occurs at asparagine 127. Intrachain disulfides connect cysteine 134–cysteine 143, cysteine 270–cysteine 382, cysteine 294–cysteine 342, cysteine 522–cysteine 540, and cysteine 603–cysteine 655. The region spanning 569 to 671 (PAVQCLGQGQ…FSQTVVRFAL (103 aa)) is the Ig-like C2-type domain. A glycan (N-linked (GlcNAc...) asparagine) is linked at asparagine 652.

Belongs to the semaphorin family. Highly expressed in lung and kidney. Weakly expressed in brain.

Its subcellular location is the secreted. Has chemorepulsive activities for sympathetic axons. Ligand of NRP2. The chain is Semaphorin-3G (Sema3g) from Mus musculus (Mouse).